Here is a 373-residue protein sequence, read N- to C-terminus: StAR-related lipid transfer protein 7, mitochondrial (373 aa).

Residues 1 to 61 (MFPRRPPATL…YSESSRCALL (61 aa)) constitute a mitochondrion transit peptide. The stretch at 89-114 (DEERIQEEELQRSINEMKRLEEMSNI) forms a coiled coil. Positions 115 to 330 (FQSSGVENYP…LHMATLKAKN (216 aa)) constitute an START domain. Disordered regions lie at residues 118 to 141 (SGVE…KDKE) and 347 to 373 (SSEA…IEYA).

In terms of processing, proteolytically cleaved by PARL. As to expression, expressed in epithelial cells of airways, peripheral bronchioles and alveoli, as well as in the basal cell layer of the epidermis (at protein level).

Its subcellular location is the mitochondrion. Its function is as follows. May play a protective role in mucosal tissues by preventing exaggerated allergic responses. The sequence is that of StAR-related lipid transfer protein 7, mitochondrial (Stard7) from Mus musculus (Mouse).